The following is a 418-amino-acid chain: MKLPAAAGDAIVIGPNAVRLIKSWGEQLCEEIEPHLSNATHAEMLDHHDRFIVRHELAGRGKGWFTNRGRLISILYEHARKLGIDIRLGSRVTKYWEEDGRAGVIVNDRERLAADCVICADGVHSAARAWLTGQVDTQQHSGWANFRAHMTTEQLAKDPEASWVLQGTREKDRVYVWFGDGINLAIMTMKRGQELAWALMHTDKFNAHESWAGGRASIDDALATLSPWPGRLRPSSVIRHTLPEKLVDHALIYRPPLDTWVSAGGRVMLIGDAAHPYFPVVGQGGSQAIEDGVVVATALELAGKENVPLALRIRATLTEENNVLMEAGNSRYPRATVIQLGSSTLQEHLFWPDWEAVAKDPSVFAFPNPEWILGHDCREYTHQVFDTVVRAVRGEGEYIPRNIPADGAYRVEDTYSPE.

FAD-binding residues include Val12 and Arg68. Arg147 is an active-site residue. The FAD site is built by Asp272 and Gly285.

The protein belongs to the paxM FAD-dependent monooxygenase family.

The protein localises to the cytoplasm. The protein operates within alkaloid biosynthesis. Its function is as follows. FAD-dependent monooxygenase; part of the gene cluster that mediates the biosynthesis of the antitumor fumiquinazolines that confer a dual-usage capability to defend against phagocytes in the environment and animal hosts. The simplest member is fumiquinazoline F (FQF) with a 6-6-6 tricyclic core derived from anthranilic acid (Ant), tryptophan (Trp), and alanine (Ala). The trimodular NRPS fmqA is responsible for FQF formation. Modules 1, 2 and 3 of fmqA are predicted to activate and load Ant, Trp and Ala, respectively, providing for the assembly of an Ant-Trp-Ala-S-enzyme intermediate that would undergo double cyclization for chain release and generation of the tricyclic 6-6-6 product fumiquinazoline F. The presence of an E domain predicted for module 2 of fmqA is consistent with epimerization of L-Trp to D-Trp during assembly to generate the R-stereocenter at C14 of FQF. The FAD-dependent monooxygenase fmqB and the monomodular NRPS fmqC then maturate FQF to FQA. FmqB oxidizes the 2',3'-double bond of the indole side chain of FQF, and fmqC activates L-Ala as the adenylate, installs it as the pantetheinyl thioester on its carrier protein domain, and acylates the oxidized indole for subsequent intramolecular cyclization to create the 6-5-5-imidazolindolone of FQA. The FAD-linked oxidoreductase fmqD introduces a third layer of scaffold complexity by converting FQA to the spirohemiaminal FQC, presumably by catalyzing the formation of a transient imine within the pyrazinone ring. FQC subsequently converts nonenzymatically to the known cyclic aminal FQD. The polypeptide is FAD-dependent monooxygenase fmqB (Aspergillus fumigatus (strain ATCC MYA-4609 / CBS 101355 / FGSC A1100 / Af293) (Neosartorya fumigata)).